The sequence spans 214 residues: Large ribosomal subunit protein uL3 (214 aa).

Gln151 is modified (N5-methylglutamine).

Belongs to the universal ribosomal protein uL3 family. Part of the 50S ribosomal subunit. Forms a cluster with proteins L14 and L19. Post-translationally, methylated by PrmB.

Its function is as follows. One of the primary rRNA binding proteins, it binds directly near the 3'-end of the 23S rRNA, where it nucleates assembly of the 50S subunit. This is Large ribosomal subunit protein uL3 from Saccharophagus degradans (strain 2-40 / ATCC 43961 / DSM 17024).